The sequence spans 1187 residues: Phospholipid-transporting ATPase IH (1187 aa).

Topologically, residues 1–61 (MDCSLLRTLV…SSKYTFWNFI (61 aa)) are cytoplasmic. The chain crosses the membrane as a helical span at residues 62 to 82 (PKNLFEQFRRIANFYFLIIFL). Residues 83–88 (VQLIID) are Extracellular-facing. A helical membrane pass occupies residues 89-110 (TPTSPVTSGLPLFFVITVTAIK). The Cytoplasmic portion of the chain corresponds to 111-296 (QGYEDWLRHK…SAVEKSMNTF (186 aa)). A helical transmembrane segment spans residues 297-318 (LIVYLCILVSKALINTVLKYVW). Residues 319–349 (QSEPFRDEPWYNEKTESERQRNLFLRAFTDF) lie on the Extracellular side of the membrane. Residues 350–372 (LAFMVLFNYIIPVSMYVTVEMQK) form a helical membrane-spanning segment. Over 373–884 (FLGSYFITWD…GHFYYIRISE (512 aa)) the chain is Cytoplasmic. Residue D414 is the 4-aspartylphosphate intermediate of the active site. D414, K415, T416, E513, F555, K578, R609, T689, G690, and D691 together coordinate ATP. Residue D414 participates in Mg(2+) binding. Position 416 (T416) interacts with Mg(2+). Position 740 is a phosphoserine (S740). 2 residues coordinate ATP: R801 and K807. D828 is a binding site for Mg(2+). N831 and D832 together coordinate ATP. Residue D832 coordinates Mg(2+). Residues 885-905 (LVQYFFYKNVCFIFPQFLYQF) form a helical membrane-spanning segment. Residues 906 to 917 (FCGFSQQTLYDT) are Extracellular-facing. Residues 918–937 (AYLTLYNISFTSLPILLYSL) form a helical membrane-spanning segment. Residues 938 to 967 (MEQHVGIDVLKRDPTLYRDIAKNALLRWRV) lie on the Cytoplasmic side of the membrane. The chain crosses the membrane as a helical span at residues 968–989 (FIYWTFLGVFDALVFFFGAYFI). Residues 990-1003 (FENTTVTINGQMFG) are Extracellular-facing. Residues 1004-1026 (NWTFGTLVFTVMVLTVTLKLALD) traverse the membrane as a helical segment. Over 1027–1032 (THYWTW) the chain is Cytoplasmic. Residues 1033 to 1053 (INHFVIWGSLLFYIAFSLLWG) traverse the membrane as a helical segment. The Extracellular segment spans residues 1054–1071 (GVIWPFLSYQRMYYVFIS). Residues 1072–1096 (MLSSGPAWLGIILLVTVGLLPDVLK) traverse the membrane as a helical segment. At 1097–1138 (KVLCRQLWPTATERTQNIQHQDSISEFTPLASLPSWGAQGSR) the chain is on the cytoplasmic side. A phosphoserine mark is found at S1148 and S1158.

Belongs to the cation transport ATPase (P-type) (TC 3.A.3) family. Type IV subfamily. As to quaternary structure, component of a P4-ATPase flippase complex which consists of a catalytic alpha subunit ATP11A and an accessory beta subunit TMEM30A. Requires Mg(2+) as cofactor. Proteolytically cleaved by CASP3. As to expression, widely expressed. Expressed in myoblasts. Expressed in retina, brain, liver, testes and kidney (at protein level). Expressed in the inner ear.

The protein localises to the cell membrane. It localises to the early endosome. Its subcellular location is the recycling endosome. The protein resides in the endoplasmic reticulum membrane. The catalysed reaction is ATP + H2O + phospholipidSide 1 = ADP + phosphate + phospholipidSide 2.. It carries out the reaction a 1,2-diacyl-sn-glycero-3-phospho-L-serine(out) + ATP + H2O = a 1,2-diacyl-sn-glycero-3-phospho-L-serine(in) + ADP + phosphate + H(+). It catalyses the reaction a 1,2-diacyl-sn-glycero-3-phosphoethanolamine(out) + ATP + H2O = a 1,2-diacyl-sn-glycero-3-phosphoethanolamine(in) + ADP + phosphate + H(+). Its function is as follows. Catalytic component of a P4-ATPase flippase complex which catalyzes the hydrolysis of ATP coupled to the transport of aminophospholipids, phosphatidylserines (PS) and phosphatidylethanolamines (PE), from the outer to the inner leaflet of the plasma membrane. Does not show flippase activity toward phosphatidylcholine (PC). Contributes to the maintenance of membrane lipid asymmetry with a specific role in morphogenesis of muscle cells. In myoblasts, mediates PS enrichment at the inner leaflet of plasma membrane, triggering PIEZO1-dependent Ca2+ influx and Rho GTPases signal transduction, subsequently leading to the assembly of cortical actomyosin fibers and myotube formation. The sequence is that of Phospholipid-transporting ATPase IH (Atp11a) from Mus musculus (Mouse).